We begin with the raw amino-acid sequence, 217 residues long: PTB-containing, cubilin and LRP1-interacting protein (217 aa).

The PID domain occupies V60–G217. Residues K194 to G217 form a disordered region. Phosphoserine occurs at positions 202, 203, and 214. Acidic residues predominate over residues A208–G217.

In terms of assembly, found in a complex with PID1/PCLI1, LRP1 and CUBNI. Interacts with LRP1 and CUBN.

The protein localises to the cytoplasm. Its function is as follows. Increases proliferation of preadipocytes without affecting adipocytic differentiation. The polypeptide is PTB-containing, cubilin and LRP1-interacting protein (Pid1) (Mus musculus (Mouse)).